The following is a 441-amino-acid chain: Ribosomal protein uS12 methylthiotransferase RimO (441 aa).

The MTTase N-terminal domain occupies 7–117 (ASIAMISLGC…VVLEVHRAAP (111 aa)). [4Fe-4S] cluster contacts are provided by Cys-16, Cys-52, Cys-81, Cys-150, Cys-154, and Cys-157. The Radical SAM core domain occupies 136–373 (LTPRHYAYLK…MAHQQAISAA (238 aa)). The 66-residue stretch at 376–441 (QTRVGREIDV…DEYDLHGDAV (66 aa)) folds into the TRAM domain.

Belongs to the methylthiotransferase family. RimO subfamily. [4Fe-4S] cluster serves as cofactor.

The protein localises to the cytoplasm. It carries out the reaction L-aspartate(89)-[ribosomal protein uS12]-hydrogen + (sulfur carrier)-SH + AH2 + 2 S-adenosyl-L-methionine = 3-methylsulfanyl-L-aspartate(89)-[ribosomal protein uS12]-hydrogen + (sulfur carrier)-H + 5'-deoxyadenosine + L-methionine + A + S-adenosyl-L-homocysteine + 2 H(+). Catalyzes the methylthiolation of an aspartic acid residue of ribosomal protein uS12. The protein is Ribosomal protein uS12 methylthiotransferase RimO of Bordetella petrii (strain ATCC BAA-461 / DSM 12804 / CCUG 43448).